We begin with the raw amino-acid sequence, 187 residues long: Large ribosomal subunit protein uL6c (187 aa).

The protein belongs to the universal ribosomal protein uL6 family. In terms of assembly, part of the 50S ribosomal subunit.

Its subcellular location is the plastid. The protein localises to the chloroplast. Its function is as follows. Binds 23S rRNA. In Thalassiosira pseudonana (Marine diatom), this protein is Large ribosomal subunit protein uL6c (rpl6).